A 347-amino-acid polypeptide reads, in one-letter code: tRNA N6-adenosine threonylcarbamoyltransferase (347 aa).

Fe cation is bound by residues His-113 and His-117. Substrate-binding positions include 136–140 (LVSGG), Asp-170, Gly-183, Asp-187, and Asn-282. Asp-310 contacts Fe cation.

This sequence belongs to the KAE1 / TsaD family. The cofactor is Fe(2+).

The protein resides in the cytoplasm. The enzyme catalyses L-threonylcarbamoyladenylate + adenosine(37) in tRNA = N(6)-L-threonylcarbamoyladenosine(37) in tRNA + AMP + H(+). In terms of biological role, required for the formation of a threonylcarbamoyl group on adenosine at position 37 (t(6)A37) in tRNAs that read codons beginning with adenine. Is involved in the transfer of the threonylcarbamoyl moiety of threonylcarbamoyl-AMP (TC-AMP) to the N6 group of A37, together with TsaE and TsaB. TsaD likely plays a direct catalytic role in this reaction. This Cutibacterium acnes (strain DSM 16379 / KPA171202) (Propionibacterium acnes) protein is tRNA N6-adenosine threonylcarbamoyltransferase.